The primary structure comprises 421 residues: UDP-N-acetylglucosamine 1-carboxyvinyltransferase 2 (421 aa).

Residue 22–23 (KN) coordinates phosphoenolpyruvate. R95 is a UDP-N-acetyl-alpha-D-glucosamine binding site. C119 acts as the Proton donor in catalysis. C119 carries the post-translational modification 2-(S-cysteinyl)pyruvic acid O-phosphothioketal. UDP-N-acetyl-alpha-D-glucosamine-binding positions include 124–128 (RPIEQ), D308, and V330.

The protein belongs to the EPSP synthase family. MurA subfamily.

Its subcellular location is the cytoplasm. It carries out the reaction phosphoenolpyruvate + UDP-N-acetyl-alpha-D-glucosamine = UDP-N-acetyl-3-O-(1-carboxyvinyl)-alpha-D-glucosamine + phosphate. Its pathway is cell wall biogenesis; peptidoglycan biosynthesis. Cell wall formation. Adds enolpyruvyl to UDP-N-acetylglucosamine. The chain is UDP-N-acetylglucosamine 1-carboxyvinyltransferase 2 from Staphylococcus haemolyticus (strain JCSC1435).